The chain runs to 227 residues: Cytochrome c oxidase subunit 2 (227 aa).

The Mitochondrial intermembrane portion of the chain corresponds to 1–14 (MAHPVQLSLQDATS). The chain crosses the membrane as a helical span at residues 15–45 (PIMEELITFHDHAFMAMSLISFLVLYALALT). The Mitochondrial matrix segment spans residues 46 to 59 (LTTKLTNTNITDAQ). The helical transmembrane segment at 60 to 87 (EMETIWTILPAVILILIALPSLRVLYLT) threads the bilayer. Residues 88–227 (DEVNDPSLTI…IFEMGPVFTL (140 aa)) are Mitochondrial intermembrane-facing. 6 residues coordinate Cu cation: His161, Cys196, Glu198, Cys200, His204, and Met207. Mg(2+) is bound at residue Glu198.

This sequence belongs to the cytochrome c oxidase subunit 2 family. Component of the cytochrome c oxidase (complex IV, CIV), a multisubunit enzyme composed of 14 subunits. The complex is composed of a catalytic core of 3 subunits MT-CO1, MT-CO2 and MT-CO3, encoded in the mitochondrial DNA, and 11 supernumerary subunits COX4I, COX5A, COX5B, COX6A, COX6B, COX6C, COX7A, COX7B, COX7C, COX8 and NDUFA4, which are encoded in the nuclear genome. The complex exists as a monomer or a dimer and forms supercomplexes (SCs) in the inner mitochondrial membrane with NADH-ubiquinone oxidoreductase (complex I, CI) and ubiquinol-cytochrome c oxidoreductase (cytochrome b-c1 complex, complex III, CIII), resulting in different assemblies (supercomplex SCI(1)III(2)IV(1) and megacomplex MCI(2)III(2)IV(2)). Found in a complex with TMEM177, COA6, COX18, COX20, SCO1 and SCO2. Interacts with TMEM177 in a COX20-dependent manner. Interacts with COX20. Interacts with COX16. Cu cation is required as a cofactor.

Its subcellular location is the mitochondrion inner membrane. It catalyses the reaction 4 Fe(II)-[cytochrome c] + O2 + 8 H(+)(in) = 4 Fe(III)-[cytochrome c] + 2 H2O + 4 H(+)(out). Its function is as follows. Component of the cytochrome c oxidase, the last enzyme in the mitochondrial electron transport chain which drives oxidative phosphorylation. The respiratory chain contains 3 multisubunit complexes succinate dehydrogenase (complex II, CII), ubiquinol-cytochrome c oxidoreductase (cytochrome b-c1 complex, complex III, CIII) and cytochrome c oxidase (complex IV, CIV), that cooperate to transfer electrons derived from NADH and succinate to molecular oxygen, creating an electrochemical gradient over the inner membrane that drives transmembrane transport and the ATP synthase. Cytochrome c oxidase is the component of the respiratory chain that catalyzes the reduction of oxygen to water. Electrons originating from reduced cytochrome c in the intermembrane space (IMS) are transferred via the dinuclear copper A center (CU(A)) of subunit 2 and heme A of subunit 1 to the active site in subunit 1, a binuclear center (BNC) formed by heme A3 and copper B (CU(B)). The BNC reduces molecular oxygen to 2 water molecules using 4 electrons from cytochrome c in the IMS and 4 protons from the mitochondrial matrix. The protein is Cytochrome c oxidase subunit 2 (MT-CO2) of Macaca fascicularis (Crab-eating macaque).